Here is an 87-residue protein sequence, read N- to C-terminus: U3-theraphotoxin-Hhn1l (87 aa).

The N-terminal stretch at 1–24 is a signal peptide; the sequence is MVNMKASMFLTFAGLVLLFVVCYA. A propeptide spanning residues 25-52 is cleaved from the precursor; that stretch reads SESEEKEFPKEMLSSIFAVDNDFKQEER. Disulfide bonds link Cys-54–Cys-67, Cys-61–Cys-72, and Cys-66–Cys-79.

It belongs to the neurotoxin 10 (Hwtx-1) family. 51 (Hntx-8) subfamily. Hntx-8 sub-subfamily. In terms of tissue distribution, expressed by the venom gland.

It localises to the secreted. Its function is as follows. Ion channel inhibitor. The protein is U3-theraphotoxin-Hhn1l of Cyriopagopus hainanus (Chinese bird spider).